The sequence spans 151 residues: Aspartate carbamoyltransferase regulatory chain (151 aa).

Residues Cys108, Cys113, Cys136, and Cys139 each contribute to the Zn(2+) site.

This sequence belongs to the PyrI family. In terms of assembly, contains catalytic and regulatory chains. Zn(2+) is required as a cofactor.

Involved in allosteric regulation of aspartate carbamoyltransferase. This Porphyromonas gingivalis (strain ATCC 33277 / DSM 20709 / CIP 103683 / JCM 12257 / NCTC 11834 / 2561) protein is Aspartate carbamoyltransferase regulatory chain.